The primary structure comprises 758 residues: MAVPAALIPPTQLVPPQPPISTSASSSGTTTSTSSATSSPAPSIGPPASSGPTLFRPEPIASAAAAAATVTSTGGGGGGGGSGGGGGSSGNGGGGGGGGGGSNCNPNLAAASNGSGGGGGGISAGGGVASSTPINASTGSSSSSSSSSSSSSSSSSSSSSSSSCGPLPGKPVYSTPSPVENTPQNNECKMVDLRGAKVASFTVEGCELICLPQAFDLFLKHLVGGLHTVYTKLKRLEITPVVCNVEQVRILRGLGAIQPGVNRCKLISRKDFETLYNDCTNASSRPGRPPKRTQSVTSPENSHIMPHSVPGLMSPGIIPPTGLTAAAAAAAAATNAAIAEAMKVKKIKLEAMSNYHASNNQHGADSENGDMNSSVGSSDGSWDKETLPSSPSQGPQASITHPRMPGARSLPLSHPLNHLQQSHLLPNGLELPFMMMPHPLIPVSLPPASVTMAMSQMNHLSTIANMAAAAQVQSPPSRVETSVIKERVPDSPSPAPSLEEGRRPGSHPSSHRSSSVSSSPARTESSSDRIPVHQNGLSMNQMLMGLSPNVLPGPKEGDLAGHDMGHESKRMHIEKDETPLSTPTARDSLDKLSLTGHGQPLPPGFPSPFLFPDGLSSIETLLTNIQGLLKVAIDNARAQEKQVQLEKTELKMDFLRERELRETLEKQLAMEQKNRAIVQKRLKKEKKAKRKLQEALEFETKRREQAEQTLKQAASTDSLRVLNDSLTPEIEADRSGGRTDAERTIQDGRLYLKTTVMY.

Disordered stretches follow at residues Met1–Asn105 and Ile134–Asn185. Residues Ile20 to Thr53 show a composition bias toward low complexity. Over residues Thr73–Ser102 the composition is skewed to gly residues. The segment covering Ser140–Ser163 has biased composition (low complexity). The span at Ser174 to Asn185 shows a compositional bias: polar residues. Residues Lys189–Leu275 are DACHbox-N. The interaction with SIX6 and HDAC3 stretch occupies residues Lys189–Lys384. Disordered stretches follow at residues Thr280–Ser302, Ser358–His414, Ser474–Val532, and Met544–Met564. 3 stretches are compositionally biased toward polar residues: residues Arg292–Asn301, Ser358–Gly380, and Leu387–Ile399. At Ser491 the chain carries Phosphoserine. Residues Ser506–Glu524 are compositionally biased toward low complexity. A compositionally biased stretch (basic and acidic residues) spans Lys555–Met564. Positions Ser616 to Leu696 are DACHbox-C. The interval Gly627 to Ala706 is interaction with SIN3A. Positions Lys630 to Ser718 form a coiled coil.

It belongs to the DACH/dachshund family. In terms of assembly, interacts with SIX1, SIX6 and EYA3. Interacts with NCOR1 and HDAC3 through its N-terminus. Interacts with SIN3A through its C-terminus. Interacts with SMAD3 and SMAD4. In terms of tissue distribution, widely expressed. Isoform 2 is found in brain, heart, kidney, liver, leukocytes and spleen. Isoform 3 is found in liver and heart. Isoform 4 is found in spleen.

It localises to the nucleus. Functionally, transcription factor that is involved in regulation of organogenesis. Seems to be a regulator of SIX1, SIX6 and probably SIX5. Corepression of precursor cell proliferation in myoblasts by SIX1 is switched to coactivation through recruitment of EYA3 to the SIX1-DACH1 complex. Transcriptional activation also seems to involve association of CREBBP. Seems to act as a corepressor of SIX6 in regulating proliferation by directly repressing cyclin-dependent kinase inhibitors, including the p27Kip1 promoter. Inhibits TGF-beta signaling through interaction with SMAD4 and NCOR1. Binds to chromatin DNA via its DACHbox-N domain. The protein is Dachshund homolog 1 (DACH1) of Homo sapiens (Human).